Reading from the N-terminus, the 982-residue chain is Glutamate [NMDA] receptor subunit 1 (982 aa).

An N-terminal signal peptide occupies residues Met1–Ala16. Residues Gln17–Ser561 are Extracellular-facing. Residues Asn247, Asn303, Asn334, Asn386, Asn443, Asn470, and Asn490 are each glycosylated (N-linked (GlcNAc...) asparagine). Glycine is bound by residues Pro518–Thr520 and Arg525. A helical transmembrane segment spans residues Asn562–Leu582. Residues Asp583–Trp639 lie on the Cytoplasmic side of the membrane. A helical transmembrane segment spans residues Ala640–Leu660. Over Glu661 to Asn819 the chain is Extracellular. Residue Asn681 is glycosylated (N-linked (GlcNAc...) asparagine). Residues Ser691 and Asp735 each coordinate glycine. The helical transmembrane segment at Met820–Ile840 threads the bilayer. The Cytoplasmic segment spans residues Glu841–Val982. Residues Glu934–Val982 form a disordered region. Polar residues predominate over residues Gly972–Val982.

This sequence belongs to the glutamate-gated ion channel (TC 1.A.10.1) family. In terms of assembly, forms a heteromeric NMDA channel with Nmdar2.

The protein resides in the cell membrane. Its subcellular location is the postsynaptic cell membrane. It localises to the postsynaptic density. NMDA receptor subtype of glutamate-gated ion channels with high calcium permeability and voltage-dependent sensitivity to magnesium. Mediated by glycine. This protein plays a key role in synaptic plasticity, synaptogenesis, excitotoxicity, memory acquisition and learning. It mediates neuronal functions in glutamate neurotransmission. Is involved in the cell surface targeting of NMDA receptors. Plays a role in associative learning and in long-term memory consolidation. The protein is Glutamate [NMDA] receptor subunit 1 of Drosophila willistoni (Fruit fly).